An 87-amino-acid chain; its full sequence is Keratin-associated protein 19-3 (87 aa).

The interval 9–82 (GGLGYGYGSF…RRPSCCGGYG (74 aa)) is 23 X 2 AA repeats of G-[YCGS].

This sequence belongs to the KRTAP type 19 family. As to quaternary structure, interacts with hair keratins. As to expression, strong expression in narrowly defined pattern restricted to the lower and middle cortical regions of the hair shaft in both developing and cycling hair. During hair follicle regression (catagen), expression levels decrease until expression is no longer detectable in follicles at resting stage (telogen).

In terms of biological role, in the hair cortex, hair keratin intermediate filaments are embedded in an interfilamentous matrix, consisting of hair keratin-associated proteins (KRTAP), which are essential for the formation of a rigid and resistant hair shaft through their extensive disulfide bond cross-linking with abundant cysteine residues of hair keratins. The matrix proteins include the high-sulfur and high-glycine-tyrosine keratins. The protein is Keratin-associated protein 19-3 (Krtap19-3) of Mus musculus (Mouse).